Reading from the N-terminus, the 205-residue chain is MDELTPRQSEILAWIRARMAEDSLPPTRAELMRAFDFRSPNAAESHLRVLARKGYILLQSGTARGIRLCASEEETGLPLIGRVAAGQPMLAEEFREGQLPVDPKLFSPGADYLLRVQGMSMRDAGILDGDILAVRHDASLTLQDGQMVVARVNGEVTVKRWKRDGKQVWLLPENPDFSPISVDLQRDSLTIEGVVVGLLRIGGNL.

The segment at residues 28–48 is a DNA-binding region (H-T-H motif); sequence RAELMRAFDFRSPNAAESHLR. Catalysis depends on for autocatalytic cleavage activity residues Ser-120 and Lys-159.

Belongs to the peptidase S24 family. As to quaternary structure, homodimer.

The catalysed reaction is Hydrolysis of Ala-|-Gly bond in repressor LexA.. Represses a number of genes involved in the response to DNA damage (SOS response), including recA and lexA. In the presence of single-stranded DNA, RecA interacts with LexA causing an autocatalytic cleavage which disrupts the DNA-binding part of LexA, leading to derepression of the SOS regulon and eventually DNA repair. The polypeptide is LexA repressor (Acidithiobacillus ferrooxidans (strain ATCC 23270 / DSM 14882 / CIP 104768 / NCIMB 8455) (Ferrobacillus ferrooxidans (strain ATCC 23270))).